Here is a 533-residue protein sequence, read N- to C-terminus: WD repeat-containing protein JIP5 (533 aa).

WD repeat units lie at residues 26-67 (NYSD…EKQS), 84-130 (GKVS…GSCR), 176-215 (NSND…GSKL), 264-309 (NQDD…FMDQ), and 372-409 (GAAD…EIAL). 2 stretches are compositionally biased toward acidic residues: residues 408–428 (ALDE…EDDL) and 437–452 (ASDE…EDEK). Residues 408-533 (ALDESDDSDD…EHGIRRFDDL (126 aa)) form a disordered region. Composition is skewed to basic and acidic residues over residues 453–463 (EDKPVKIDHPL) and 521–533 (QKHE…FDDL).

This sequence belongs to the WD repeat WDR55 family.

Its subcellular location is the nucleus. It localises to the nucleolus. The polypeptide is WD repeat-containing protein JIP5 (JIP5) (Scheffersomyces stipitis (strain ATCC 58785 / CBS 6054 / NBRC 10063 / NRRL Y-11545) (Yeast)).